The following is a 291-amino-acid chain: Lipoyl synthase 1 (291 aa).

Residues Cys34, Cys39, Cys45, Cys60, Cys64, Cys67, and Ser274 each contribute to the [4Fe-4S] cluster site. The Radical SAM core domain occupies 46-263 (FQAGTATFLI…QVYGEELGFL (218 aa)).

The protein belongs to the radical SAM superfamily. Lipoyl synthase family. Requires [4Fe-4S] cluster as cofactor.

It is found in the cytoplasm. It carries out the reaction [[Fe-S] cluster scaffold protein carrying a second [4Fe-4S](2+) cluster] + N(6)-octanoyl-L-lysyl-[protein] + 2 oxidized [2Fe-2S]-[ferredoxin] + 2 S-adenosyl-L-methionine + 4 H(+) = [[Fe-S] cluster scaffold protein] + N(6)-[(R)-dihydrolipoyl]-L-lysyl-[protein] + 4 Fe(3+) + 2 hydrogen sulfide + 2 5'-deoxyadenosine + 2 L-methionine + 2 reduced [2Fe-2S]-[ferredoxin]. Its pathway is protein modification; protein lipoylation via endogenous pathway; protein N(6)-(lipoyl)lysine from octanoyl-[acyl-carrier-protein]: step 2/2. Its function is as follows. Catalyzes the radical-mediated insertion of two sulfur atoms into the C-6 and C-8 positions of the octanoyl moiety bound to the lipoyl domains of lipoate-dependent enzymes, thereby converting the octanoylated domains into lipoylated derivatives. The polypeptide is Lipoyl synthase 1 (Nostoc sp. (strain PCC 7120 / SAG 25.82 / UTEX 2576)).